Consider the following 34-residue polypeptide: N(4)-(Beta-N-acetylglucosaminyl)-L-asparaginase (34 aa).

Thr18 functions as the Nucleophile in the catalytic mechanism.

The protein belongs to the Ntn-hydrolase family. Heterotetramer of two alpha and two beta chains arranged as a dimer of alpha/beta heterodimers. In terms of processing, cleaved into an alpha and beta chain by autocatalysis; this activates the enzyme. The N-terminal residue of the beta subunit is responsible for the nucleophile hydrolase activity. N-glycosylated.

The protein resides in the lysosome. It carries out the reaction N(4)-(beta-N-acetyl-D-glucosaminyl)-L-asparagine + H2O = N-acetyl-beta-D-glucosaminylamine + L-aspartate + H(+). In terms of biological role, cleaves the GlcNAc-Asn bond which joins oligosaccharides to the peptide of asparagine-linked glycoproteins. This Sus scrofa (Pig) protein is N(4)-(Beta-N-acetylglucosaminyl)-L-asparaginase (AGA).